The following is a 462-amino-acid chain: MDSSLQHKTTKIFPSQASRDSLSNRVTMISGAKPLAFSIERIMSRTPEPKCLPVPSLLQGSVPKGDQKQALHINSSSIPCMIPFVPVAYDHCPKIGISGAELRKSHLDSSPPFSCNDLLNCALTLKGDFPREALPLQQYKLVRPRVVNHSSFHAMGAAFCYFNRGDSQCHPPASINIHPVASYFLGSPLHQAPKSYLAERNKLVLPSVEKFSSGVTFKDLSQAQFQHYMKEGAHSLSDKITFKTSAKFSSASPSNKPKVFTCEVCGKVFNAHYNLTRHMPVHTGARPFVCKICGKGFRQASTLCRHKIIHTQEKPHKCNQCGKAFNRSSTLNTHTRIHAGYKPFVCEFCGKGFHQKGNYKNHKLTHSGEKQFKCNICNKAFHQIYNLTFHMHTHNDKKPFTCPTCGKGFCRNFDLKKHVRKLHDSNTAAPHAIGGTGQEELLLPNREPSPTIQSPQLQKSGY.

The Engrailed homology 1 repressor motif lies at 34 to 49; the sequence is PLAFSIERIMSRTPEP. 6 consecutive C2H2-type zinc fingers follow at residues 260–282, 288–310, 316–338, 344–366, 372–394, and 400–423; these read FTCEVCGKVFNAHYNLTRHMPVH, FVCKICGKGFRQASTLCRHKIIH, HKCNQCGKAFNRSSTLNTHTRIH, FVCEFCGKGFHQKGNYKNHKLTH, FKCNICNKAFHQIYNLTFHMHTH, and FTCPTCGKGFCRNFDLKKHVRKLH. Positions 441 to 462 are disordered; sequence LLLPNREPSPTIQSPQLQKSGY. Positions 448–462 are enriched in polar residues; that stretch reads PSPTIQSPQLQKSGY.

This sequence belongs to the krueppel C2H2-type zinc-finger protein family.

It is found in the nucleus. In terms of biological role, transcription repressor. Involved in the development of the forebrain region. The protein is Fez family zinc finger protein 1 (fezf1) of Xenopus tropicalis (Western clawed frog).